The sequence spans 328 residues: Biotin synthase (328 aa).

In terms of domain architecture, Radical SAM core spans 43–272 (NVVQKASLLS…KSTVRLSAGR (230 aa)). Residues C58, C62, and C65 each contribute to the [4Fe-4S] cluster site. [2Fe-2S] cluster-binding residues include C103, C135, C195, and R267.

This sequence belongs to the radical SAM superfamily. Biotin synthase family. In terms of assembly, homodimer. It depends on [4Fe-4S] cluster as a cofactor. Requires [2Fe-2S] cluster as cofactor.

It catalyses the reaction (4R,5S)-dethiobiotin + (sulfur carrier)-SH + 2 reduced [2Fe-2S]-[ferredoxin] + 2 S-adenosyl-L-methionine = (sulfur carrier)-H + biotin + 2 5'-deoxyadenosine + 2 L-methionine + 2 oxidized [2Fe-2S]-[ferredoxin]. It participates in cofactor biosynthesis; biotin biosynthesis; biotin from 7,8-diaminononanoate: step 2/2. Functionally, catalyzes the conversion of dethiobiotin (DTB) to biotin by the insertion of a sulfur atom into dethiobiotin via a radical-based mechanism. The polypeptide is Biotin synthase (Allorhizobium ampelinum (strain ATCC BAA-846 / DSM 112012 / S4) (Agrobacterium vitis (strain S4))).